The sequence spans 92 residues: C-C motif chemokine 3 (92 aa).

A signal peptide spans methionine 1 to serine 23. 2 disulfides stabilise this stretch: cysteine 34/cysteine 57 and cysteine 35/cysteine 73.

This sequence belongs to the intercrine beta (chemokine CC) family. As to quaternary structure, self-associates. Also heterodimer of MIP-1-alpha(4-69) and MIP-1-beta(3-69). Interacts with CCR1.

Its subcellular location is the secreted. Monokine with inflammatory and chemokinetic properties. Binds to CCR1, CCR4 and CCR5. One of the major HIV-suppressive factors produced by CD8+ T-cells. Recombinant MIP-1-alpha induces a dose-dependent inhibition of different strains of HIV-1, HIV-2, and simian immunodeficiency virus (SIV). This is C-C motif chemokine 3 (Ccl3) from Rattus norvegicus (Rat).